Reading from the N-terminus, the 528-residue chain is Na(+)/H(+) antiporter NhaB (528 aa).

11 helical membrane passes run 10–30, 63–83, 96–116, 131–165, 204–224, 240–260, 305–325, 359–379, 391–411, 449–469, and 476–496; these read IGNF…SFLI, YPLQ…MTSA, VLLL…LLLF, VSLM…FYAI, LLMH…VGEP, FVIR…LTCL, VLVG…VGLV, LAVF…APVI, LVIF…VFVG, ATPN…APLI, and MVWM…LAIE.

Belongs to the NhaB Na(+)/H(+) (TC 2.A.34) antiporter family.

It is found in the cell inner membrane. The enzyme catalyses 2 Na(+)(in) + 3 H(+)(out) = 2 Na(+)(out) + 3 H(+)(in). Na(+)/H(+) antiporter that extrudes sodium in exchange for external protons. The chain is Na(+)/H(+) antiporter NhaB from Shewanella putrefaciens (strain CN-32 / ATCC BAA-453).